A 1153-amino-acid chain; its full sequence is Protein unc-13 homolog 4B (1153 aa).

The interval 54 to 84 is disordered; that stretch reads VLKSSLAPLEENGSGGEEDSDESPDGTLQLS. One can recognise a C2 1 domain in the interval 162–288; that stretch reads ATHEEIYEAA…MKEIAVTASS (127 aa). Ca(2+) is bound by residues Asp-195, Asp-201, Asp-252, Phe-253, and Asp-254. Residues 637-755 form the MHD1 domain; sequence FEVYLILKRY…RCCIFYAQQM (119 aa). The MHD2 domain maps to 869-975; sequence SNSMDQLMMY…LETSDLIHQY (107 aa). In terms of domain architecture, C2 2 spans 990–1114; the sequence is PYGQLTITAQ…EATPPGEQIM (125 aa). Asp-1019, Asp-1025, Asp-1083, and Asp-1085 together coordinate Ca(2+).

It belongs to the unc-13 family. As to quaternary structure, interacts with Cam. Ca(2+) serves as cofactor.

The protein resides in the cytoplasm. Its subcellular location is the cytoskeleton. It is found in the cell projection. The protein localises to the filopodium. It localises to the late endosome. The protein resides in the lysosome. Its function is as follows. Essential for tracheal development in embryos. Functions with the GTPase Rab39 and downstream of dnd, to regulate lumen fusion between previously separate tracheal branches (anastomosis). Essential component of secretory lysosome-related organelles (SLs) that are present in the tracheal fusion tip cells (FCs). Mediates intracellular fusion of the extending tracheal stalk cell lumen in the FCs by recruiting the SNARE complex component Syx1A to the SLs, this may then enable the SLs to interact with complementary SNAREs (such as Syb) present in the apical membrane of the FC-FC interface and the membranes of the separate tracheal stalk cells. May also function in the maturation and exocytosis of the SLs. In Drosophila melanogaster (Fruit fly), this protein is Protein unc-13 homolog 4B.